The chain runs to 423 residues: ATP-citrate synthase alpha chain protein 2 (423 aa).

Citrate is bound by residues Asn-343, Thr-345, and Arg-376.

The protein belongs to the succinate/malate CoA ligase beta subunit family. As to quaternary structure, heterooctamer of 4 alpha and 4 beta chains.

It localises to the cytoplasm. The protein localises to the cytosol. It carries out the reaction oxaloacetate + acetyl-CoA + ADP + phosphate = citrate + ATP + CoA. In terms of biological role, ATP citrate-lyase is the primary enzyme responsible for the synthesis of cytosolic acetyl-CoA, used for the elongation of fatty acids and biosynthesis of isoprenoids, flavonoids and malonated derivatives. May supply substrate to the cytosolic acetyl-CoA carboxylase, which generates the malonyl-CoA used for the synthesis of a multitude of compounds, including very long chain fatty acids and flavonoids. Required for normal growth and development and elongation of C18 fatty acids to C20 to C24 fatty acids in seeds. In contrast to all known animal ACL enzymes having a homomeric structure, plant ACLs are composed of alpha and beta chains. This chain is ATP-citrate synthase alpha chain protein 2 (ACLA-2), found in Arabidopsis thaliana (Mouse-ear cress).